We begin with the raw amino-acid sequence, 286 residues long: Phosphate import ATP-binding protein PstB (286 aa).

Residues 40 to 281 enclose the ABC transporter domain; the sequence is IAVRNLDFYY…PREQRTQEYI (242 aa). Residue 72 to 79 participates in ATP binding; the sequence is GPSGCGKS.

Belongs to the ABC transporter superfamily. Phosphate importer (TC 3.A.1.7) family. The complex is composed of two ATP-binding proteins (PstB), two transmembrane proteins (PstC and PstA) and a solute-binding protein (PstS).

The protein resides in the cell inner membrane. It catalyses the reaction phosphate(out) + ATP + H2O = ADP + 2 phosphate(in) + H(+). In terms of biological role, part of the ABC transporter complex PstSACB involved in phosphate import. Responsible for energy coupling to the transport system. The sequence is that of Phosphate import ATP-binding protein PstB from Granulibacter bethesdensis (strain ATCC BAA-1260 / CGDNIH1).